The chain runs to 689 residues: Chloride channel protein ClC-Kb (689 aa).

Residues 1–51 lie on the Cytoplasmic side of the membrane; that stretch reads MSRVLVIEQREGEEKTLIQKHIFRPFPNTRRVVIDHLQRLKNFLFRIGDDW. Helical transmembrane passes span 52-83 and 92-112; these read YFLF…RWLQ and LRYL…TGFA. An intramembrane region (helical) is located at residues 117–128; the sequence is PHSGGSGIPELK. Ser-122 is a chloride binding site. The next 2 membrane-spanning stretches (helical) occupy residues 142–161 and 162–181; these read IKNF…AGST and MFLG…AAYL. A glycan (N-linked (GlcNAc...) asparagine) is linked at Asn-194. The segment at residues 204–225 is an intramembrane region (helical); the sequence is AAAAVGVSTVFGAPISGVLFSV. The helical transmembrane segment at 237 to 256 threads the bilayer; that stretch reads YWRGFFAATCGAFVFRLLAV. Ca(2+)-binding residues include Glu-260, Glu-262, Asp-279, and Glu-282. Helical transmembrane passes span 283 to 311 and 326 to 343; these read MFFF…LGYV and PMYS…TFPE. The segment at residues 350 to 361 is an intramembrane region (helical); the sequence is ASRLTMKELLTS. Helical transmembrane passes span 402-422 and 423-442; these read GTLA…TTLP and MPAG…GRLV. Residue Phe-428 participates in chloride binding. The helical intramembrane region spans 466 to 498; that stretch reads GGYAWQGAPAYSGAVTHSVSTALLAFEATGQIA. A helical membrane pass occupies residues 502–522; it reads PVILCVLIANAFTQKLQPSFY. Topologically, residues 523–689 are cytoplasmic; the sequence is DGTIIVKKLP…KAIEDLANPK (167 aa). CBS domains are found at residues 553–613 and 630–689; these read MNPD…SHER and ACSI…ANPK.

Belongs to the chloride channel (TC 2.A.49) family. In terms of processing, N-glycosylated on a single asparagine, probably Asn-365 or Asn-375. In terms of tissue distribution, expressed in two distinct regions of the kidney; the proximal convoluted tubule and the diluting segment.

It localises to the cell membrane. In terms of biological role, voltage-gated chloride channel. Chloride channels have several functions including the regulation of cell volume, the stabilization of membrane potential, signal transduction and transepithelial transport. This Xenopus laevis (African clawed frog) protein is Chloride channel protein ClC-Kb (clcnkb).